The following is a 219-amino-acid chain: Inner membrane protein YccA (219 aa).

Residues 1 to 22 (MDRIVSSSHDRTSLLSTHKVLR) are Periplasmic-facing. Helical transmembrane passes span 23–43 (NTYFLLSLTLAFSAITATAST) and 44–64 (VLMLPSPGLILTLVGMYGLMF). At 65–73 (LTYKTANKP) the chain is on the periplasmic side. The helical transmembrane segment at 74–94 (TGIISAFAFTGFLGYILGPIL) threads the bilayer. Residues 95-104 (NTYLSAGMGD) are Cytoplasmic-facing. A helical transmembrane segment spans residues 105–125 (VIAMALGGTALVFFCCSAYVL). The Periplasmic segment spans residues 126 to 133 (TTRKDMSF). The helical transmembrane segment at 134-154 (LGGMLMAGIVVVLIGMVANIF) threads the bilayer. Topologically, residues 155-157 (LQL) are cytoplasmic. A helical transmembrane segment spans residues 158–178 (PALHLAISAVFILISSGAILF). The Periplasmic portion of the chain corresponds to 179–195 (ETSNIIHGGETNYIRAT). The helical transmembrane segment at 196 to 216 (VSLYVSLYNIFVSLLSILGFA) threads the bilayer. Topologically, residues 217-219 (SRD) are cytoplasmic.

This sequence belongs to the BI1 family.

The protein localises to the cell inner membrane. The polypeptide is Inner membrane protein YccA (yccA) (Escherichia coli O6:H1 (strain CFT073 / ATCC 700928 / UPEC)).